The primary structure comprises 75 residues: Antimicrobial peptide ctriporin (75 aa).

Positions Met1 to Gly22 are cleaved as a signal peptide. At Lys41 the chain carries Lysine amide. Positions Glu47–Tyr75 are excised as a propeptide.

Belongs to the non-disulfide-bridged peptide (NDBP) superfamily. Short antimicrobial peptide (group 4) family. In terms of tissue distribution, expressed by the venom gland.

The protein resides in the secreted. The protein localises to the target cell membrane. Its function is as follows. Antimicrobial peptide that acts by breaking the cell wall. Is active against Gram-positive bacteria, fungi and antibiotic-resistant pathogens: S.aureus (MIC=5 ug/ml), M.luteus (MIC=5 ug/ml), B.thuringiensis (MIC=10 ug/ml), B.subtilis (MIC=10 ug/ml), C.albicans (MIC=20 ug/ml), methicillin-resistant S.aureus (MIC=5-10 ug/ml), and penicillin-resistant S.epidermidis (MIC=10 ug/ml). Also shows potent activity against antibiotic-sensitive and -resistant Acinetobacter baumannii (MIC=10-20 uM). Shows cytolytic activity against human erythrocytes. In vivo, is efficient in curing staphylococcal skin infection in mice, when externally applied. This is Antimicrobial peptide ctriporin from Chaerilus tricostatus (Scorpion).